A 364-amino-acid chain; its full sequence is DNA replication and repair protein RecF (364 aa).

Residue 30 to 37 (GDNGAGKT) coordinates ATP.

This sequence belongs to the RecF family.

It is found in the cytoplasm. Its function is as follows. The RecF protein is involved in DNA metabolism; it is required for DNA replication and normal SOS inducibility. RecF binds preferentially to single-stranded, linear DNA. It also seems to bind ATP. In Stenotrophomonas maltophilia (strain K279a), this protein is DNA replication and repair protein RecF.